Consider the following 248-residue polypeptide: 3-deoxy-manno-octulosonate cytidylyltransferase (248 aa).

Belongs to the KdsB family.

Its subcellular location is the cytoplasm. It catalyses the reaction 3-deoxy-alpha-D-manno-oct-2-ulosonate + CTP = CMP-3-deoxy-beta-D-manno-octulosonate + diphosphate. The protein operates within nucleotide-sugar biosynthesis; CMP-3-deoxy-D-manno-octulosonate biosynthesis; CMP-3-deoxy-D-manno-octulosonate from 3-deoxy-D-manno-octulosonate and CTP: step 1/1. It functions in the pathway bacterial outer membrane biogenesis; lipopolysaccharide biosynthesis. Functionally, activates KDO (a required 8-carbon sugar) for incorporation into bacterial lipopolysaccharide in Gram-negative bacteria. This Escherichia coli O6:H1 (strain CFT073 / ATCC 700928 / UPEC) protein is 3-deoxy-manno-octulosonate cytidylyltransferase.